The following is an 81-amino-acid chain: Cytotoxin 8 (81 aa).

Residues 1–21 form the signal peptide; it reads MKTLLLTLVVVTIVCLDLGYT. Cystine bridges form between C24-C42, C35-C59, C63-C74, and C75-C80.

Belongs to the three-finger toxin family. Short-chain subfamily. Type IA cytotoxin sub-subfamily. Monomer in solution; Homodimer and oligomer in the presence of negatively charged lipids forming a pore with a size ranging between 20 and 30 Angstroms. Expressed by the venom gland.

Its subcellular location is the secreted. It is found in the target cell membrane. Its function is as follows. Shows cytolytic activity on many different cells by forming pore in lipid membranes. In vivo, increases heart rate or kills the animal by cardiac arrest. In addition, it binds to heparin with high affinity, interacts with Kv channel-interacting protein 1 (KCNIP1) in a calcium-independent manner, and binds to integrin alpha-V/beta-3 (ITGAV/ITGB3) with moderate affinity. The sequence is that of Cytotoxin 8 from Naja atra (Chinese cobra).